A 392-amino-acid chain; its full sequence is Protein O-glucosyltransferase 1 (392 aa).

The N-terminal stretch at 1-23 (MELGVSSQLWLWLLLLLLPPVPG) is a signal peptide. 4 disulfides stabilise this stretch: Cys-49/Cys-56, Cys-54/Cys-357, Cys-102/Cys-108, and Cys-263/Cys-286. Asn-53 is a glycosylation site (N-linked (GlcNAc...) asparagine). The tract at residues 103–107 (MFPSR) is interaction with the consensus sequence C-X-S-X-[PA]-C in peptide substrates. The active-site Proton donor/acceptor is the Asp-133. The interval 172 to 178 (AVWPIYP) is interaction with the consensus sequence C-X-S-X-[PA]-C in peptide substrates. Tyr-177 contributes to the UDP-alpha-D-glucose binding site. A glycan (N-linked (GlcNAc...) asparagine) is linked at Asn-204. UDP-alpha-D-glucose contacts are provided by residues Ser-212, Arg-218, and 274 to 279 (VAASFR). N-linked (GlcNAc...) asparagine glycosylation is present at Asn-373. The short motif at 389–392 (KIEL) is the Prevents secretion from ER element.

This sequence belongs to the glycosyltransferase 90 family.

The protein localises to the endoplasmic reticulum lumen. The enzyme catalyses L-seryl-[EGF-like domain protein] + UDP-alpha-D-xylose = 3-O-(beta-D-xylosyl)-L-seryl-[EGF-like domain protein] + UDP + H(+). It carries out the reaction L-seryl-[EGF-like domain protein] + UDP-alpha-D-glucose = 3-O-(beta-D-glucosyl)-L-seryl-[EGF-like domain protein] + UDP + H(+). It participates in protein modification; protein glycosylation. Dual specificity glycosyltransferase that catalyzes the transfer of glucose and xylose from UDP-glucose and UDP-xylose, respectively, to a serine residue found in the consensus sequence of C-X-S-X-P-C. Specifically targets extracellular EGF repeats of protein such as CRB2, F7, F9 and NOTCH2. Acts as a positive regulator of Notch signaling by mediating O-glucosylation of Notch, leading to regulate muscle development. Notch glucosylation does not affect Notch ligand binding. Required during early development to promote gastrulation: acts by mediating O-glucosylation of CRB2, which is required for CRB2 localization to the cell membrane. The protein is Protein O-glucosyltransferase 1 (POGLUT1) of Bos taurus (Bovine).